A 518-amino-acid polypeptide reads, in one-letter code: Alpha-ionylideneethane synthase abl3 (518 aa).

2 disordered regions span residues 294–355 (AAPG…SVFE) and 440–466 (KAPP…QRSK). Over residues 299-339 (TSSDNSSDNRSSSISSTSSTGTDGSGAGDASSVHSSGVHSD) the composition is skewed to low complexity.

This sequence belongs to the alpha-ionylideneethane synthase family.

It functions in the pathway hormone biosynthesis. Functionally, alpha-ionylideneethane synthase involved in the biosynthesis of abscisic acid (ABA), a phytohormone that acts antagonistically toward salicylic acid (SA), jasmonic acid (JA) and ethylene (ETH) signaling, to impede plant defense responses. During pathogen-host interaction, ABA plays a dual role in disease severity by increasing plant susceptibility and accelerating pathogenesis in the fungus itself. The first step of the pathway catalyzes the reaction from farnesyl diphosphate to alpha-ionylideneethane performed by the alpha-ionylideneethane synthase ABA3 via a three-step reaction mechanism involving 2 neutral intermediates, beta-farnesene and allofarnesene. The cytochrome P450 monooxygenase ABA1 might then be involved in the conversion of alpha-ionylideneethane to alpha-ionylideneacetic acid. Alpha-ionylideneacetic acid is further converted to abscisic acid in 2 steps involving the cytochrome P450 monooxygenase ABA2 and the short-chain dehydrogenase/reductase ABA4, via the intermediates 1'-deoxy-ABA or 1',4'-trans-diol-ABA, depending on the order of action of these 2 enzymes. ABA2 is responsible for the hydroxylation of carbon atom C-1' and ABA4 might be involved in the oxidation of the C-4' carbon atom. The polypeptide is Alpha-ionylideneethane synthase abl3 (Pyricularia oryzae (strain Y34) (Rice blast fungus)).